Here is a 464-residue protein sequence, read N- to C-terminus: Arginine biosynthesis bifunctional protein ArgJ, chloroplastic (464 aa).

Substrate-binding residues include threonine 208, lysine 234, threonine 245, glutamate 332, asparagine 459, and threonine 464. Threonine 245 serves as the catalytic Nucleophile.

The protein belongs to the ArgJ family. Heterodimer of an alpha and a beta chain.

The protein localises to the plastid. It is found in the chloroplast. The catalysed reaction is N(2)-acetyl-L-ornithine + L-glutamate = N-acetyl-L-glutamate + L-ornithine. The enzyme catalyses L-glutamate + acetyl-CoA = N-acetyl-L-glutamate + CoA + H(+). The protein operates within amino-acid biosynthesis; L-arginine biosynthesis; L-ornithine and N-acetyl-L-glutamate from L-glutamate and N(2)-acetyl-L-ornithine (cyclic): step 1/1. It functions in the pathway amino-acid biosynthesis; L-arginine biosynthesis; N(2)-acetyl-L-ornithine from L-glutamate: step 1/4. In terms of biological role, catalyzes two activities which are involved in the cyclic version of arginine biosynthesis: the synthesis of acetylglutamate from glutamate and acetyl-CoA, and of ornithine by transacetylation between acetylornithine and glutamate. This Sorghum bicolor (Sorghum) protein is Arginine biosynthesis bifunctional protein ArgJ, chloroplastic.